A 111-amino-acid chain; its full sequence is Nucleoid-associated protein NMC1380 (111 aa).

Belongs to the YbaB/EbfC family. As to quaternary structure, homodimer.

It is found in the cytoplasm. The protein localises to the nucleoid. In terms of biological role, binds to DNA and alters its conformation. May be involved in regulation of gene expression, nucleoid organization and DNA protection. The protein is Nucleoid-associated protein NMC1380 of Neisseria meningitidis serogroup C / serotype 2a (strain ATCC 700532 / DSM 15464 / FAM18).